The primary structure comprises 250 residues: L-ascorbate peroxidase 1, cytosolic (250 aa).

Histidine 42 acts as the Proton acceptor in catalysis. Positions 113–137 are disordered; sequence VPFHPGREDKPAPPPEGRLPDATKG. Histidine 163 provides a ligand contact to heme b. Threonine 164, threonine 180, asparagine 182, and aspartate 187 together coordinate K(+).

Belongs to the peroxidase family. Ascorbate peroxidase subfamily. It depends on heme b as a cofactor. As to expression, expressed in roots, aerial vegetative parts and reproductive organs. Expressed in roots, leaves, stems and flowers.

Its subcellular location is the cytoplasm. The enzyme catalyses L-ascorbate + H2O2 = L-dehydroascorbate + 2 H2O. Inhibited by p-chloromercuriphenylsulfonic acid (CMPSA). Functionally, plays a key role in hydrogen peroxide removal. This chain is L-ascorbate peroxidase 1, cytosolic, found in Oryza sativa subsp. japonica (Rice).